Consider the following 71-residue polypeptide: Small ribosomal subunit protein eS17 (71 aa).

This sequence belongs to the eukaryotic ribosomal protein eS17 family.

This chain is Small ribosomal subunit protein eS17, found in Pyrobaculum islandicum (strain DSM 4184 / JCM 9189 / GEO3).